A 182-amino-acid chain; its full sequence is MILADAKSKMQSSVESTQRAFNTIRTGRANASLLDKVLVDYYGSPTPLKSLANISTPDASTILIQPYERNTLNIIEKAISLSDVGLTPSNDGSVIRLNIPPLTSDRRKEFVKMATKYAEEGRVAIRNIRRDAIDSIRKQEKASEISKDESKDQQDNLQKLTNEYTSRIDALLAEKEKDITTV.

Belongs to the RRF family.

Its subcellular location is the cytoplasm. Functionally, responsible for the release of ribosomes from messenger RNA at the termination of protein biosynthesis. May increase the efficiency of translation by recycling ribosomes from one round of translation to another. The protein is Ribosome-recycling factor of Nostoc punctiforme (strain ATCC 29133 / PCC 73102).